A 172-amino-acid polypeptide reads, in one-letter code: Protein-export protein SecB (172 aa).

This sequence belongs to the SecB family. As to quaternary structure, homotetramer, a dimer of dimers. One homotetramer interacts with 1 SecA dimer.

The protein resides in the cytoplasm. Functionally, one of the proteins required for the normal export of preproteins out of the cell cytoplasm. It is a molecular chaperone that binds to a subset of precursor proteins, maintaining them in a translocation-competent state. It also specifically binds to its receptor SecA. This Stenotrophomonas maltophilia (strain K279a) protein is Protein-export protein SecB.